A 181-amino-acid polypeptide reads, in one-letter code: uncharacterized protein (181 aa).

The tract at residues 126 to 148 (SYKDKEEEEDEDPEEDDDDPRVQ) is disordered. A compositionally biased stretch (acidic residues) spans 131-144 (EEEEDEDPEEDDDD).

This sequence belongs to the chlamydial CPn_0422/CT_273/TC_0545 family.

This is an uncharacterized protein from Chlamydia pneumoniae (Chlamydophila pneumoniae).